The sequence spans 132 residues: U-scoloptoxin(05)-Er3a (132 aa).

The signal sequence occupies residues 1-19; the sequence is MRSWFVFVALLAVVFLPSS.

Belongs to the scoloptoxin-05 family. In terms of processing, contains 5 disulfide bonds. In terms of tissue distribution, expressed by the venom gland.

The protein resides in the secreted. This chain is U-scoloptoxin(05)-Er3a, found in Ethmostigmus rubripes (Giant centipede).